A 140-amino-acid chain; its full sequence is MNQQDIKQKVLDVLDHHKVGSLATVQKGKPHSRYMTFFHDGLTIYTPTSKETHKAEEIENNPNVHILLGYDCEGFGDAYVEVAGKAKINNSAELKDKIWSSKLERWFDGKDDPNLVILEIEPEDIRLMNAGEKTPVSLEL.

The polypeptide is General stress protein 26 (ydaG) (Bacillus subtilis (strain 168)).